Here is a 153-residue protein sequence, read N- to C-terminus: 4'-phosphopantetheinyl transferase B, mitochondrial (153 aa).

This sequence belongs to the P-Pant transferase superfamily.

Its subcellular location is the mitochondrion. The catalysed reaction is apo-[ACP] + CoA = holo-[ACP] + adenosine 3',5'-bisphosphate + H(+). Functionally, acyl-carrier-protein synthase transfers the 4'-phosphopantetheine moiety from coenzyme A to a Ser of an acyl-carrier-protein. The 4'-phosphopantetheine (4'-PPT) portion of CoA provides the essential prosthetic group for a number of carrier proteins and multi-domain enzymes, priming them for the acceptance of acyl building blocks in fatty acid synthesis and many aspects of secondary metabolism mediated by polyketide synthases (PKSs) and non-ribosomal peptide synthetases (NRPSs). PptB is specific for the mitochondrial acyl carrier protein acpA. The chain is 4'-phosphopantetheinyl transferase B, mitochondrial from Aspergillus fumigatus (strain ATCC MYA-4609 / CBS 101355 / FGSC A1100 / Af293) (Neosartorya fumigata).